Reading from the N-terminus, the 59-residue chain is Large ribosomal subunit protein uL30 (59 aa).

It belongs to the universal ribosomal protein uL30 family. As to quaternary structure, part of the 50S ribosomal subunit.

The sequence is that of Large ribosomal subunit protein uL30 from Mycobacterium sp. (strain JLS).